Reading from the N-terminus, the 103-residue chain is uncharacterized protein (103 aa).

This is an uncharacterized protein from Escherichia coli (strain K12).